Consider the following 369-residue polypeptide: Anhydro-N-acetylmuramic acid kinase (369 aa).

12-19 contributes to the ATP binding site; that stretch reads GTSMDGVD.

The protein belongs to the anhydro-N-acetylmuramic acid kinase family.

It catalyses the reaction 1,6-anhydro-N-acetyl-beta-muramate + ATP + H2O = N-acetyl-D-muramate 6-phosphate + ADP + H(+). It participates in amino-sugar metabolism; 1,6-anhydro-N-acetylmuramate degradation. The protein operates within cell wall biogenesis; peptidoglycan recycling. In terms of biological role, catalyzes the specific phosphorylation of 1,6-anhydro-N-acetylmuramic acid (anhMurNAc) with the simultaneous cleavage of the 1,6-anhydro ring, generating MurNAc-6-P. Is required for the utilization of anhMurNAc either imported from the medium or derived from its own cell wall murein, and thus plays a role in cell wall recycling. The sequence is that of Anhydro-N-acetylmuramic acid kinase from Shewanella sp. (strain MR-7).